The following is a 137-amino-acid chain: Large ribosomal subunit protein uL16 (137 aa).

The protein belongs to the universal ribosomal protein uL16 family. In terms of assembly, part of the 50S ribosomal subunit.

Functionally, binds 23S rRNA and is also seen to make contacts with the A and possibly P site tRNAs. This is Large ribosomal subunit protein uL16 from Rhizobium meliloti (strain 1021) (Ensifer meliloti).